The sequence spans 116 residues: Large ribosomal subunit protein uL18 (116 aa).

Belongs to the universal ribosomal protein uL18 family. Part of the 50S ribosomal subunit; part of the 5S rRNA/L5/L18/L25 subcomplex. Contacts the 5S and 23S rRNAs.

In terms of biological role, this is one of the proteins that bind and probably mediate the attachment of the 5S RNA into the large ribosomal subunit, where it forms part of the central protuberance. This is Large ribosomal subunit protein uL18 from Marinomonas sp. (strain MWYL1).